A 376-amino-acid polypeptide reads, in one-letter code: PqqA peptide cyclase (376 aa).

The region spanning 7 to 222 is the Radical SAM core domain; that stretch reads VGLPLWLLAE…TNEYRDKLKA (216 aa). Residues Cys21, Cys25, and Cys28 each coordinate [4Fe-4S] cluster.

Belongs to the radical SAM superfamily. PqqE family. As to quaternary structure, interacts with PqqD. The interaction is necessary for activity of PqqE. Requires [4Fe-4S] cluster as cofactor.

It carries out the reaction [PQQ precursor protein] + S-adenosyl-L-methionine = E-Y cross-linked-[PQQ precursor protein] + 5'-deoxyadenosine + L-methionine + H(+). It functions in the pathway cofactor biosynthesis; pyrroloquinoline quinone biosynthesis. Catalyzes the cross-linking of a glutamate residue and a tyrosine residue in the PqqA protein as part of the biosynthesis of pyrroloquinoline quinone (PQQ). This Pseudomonas putida (strain ATCC 47054 / DSM 6125 / CFBP 8728 / NCIMB 11950 / KT2440) protein is PqqA peptide cyclase.